The sequence spans 692 residues: Ribosome-releasing factor 2, mitochondrial (692 aa).

The N-terminal 29 residues, methionine 1–tyrosine 29, are a transit peptide targeting the mitochondrion. One can recognise a tr-type G domain in the interval serine 31–glutamate 310. Residues alanine 40 to threonine 47, aspartate 104 to histidine 108, and asparagine 158 to aspartate 161 contribute to the GTP site.

The protein belongs to the TRAFAC class translation factor GTPase superfamily. Classic translation factor GTPase family. EF-G/EF-2 subfamily.

Its subcellular location is the mitochondrion. In terms of biological role, mitochondrial GTPase that mediates the disassembly of ribosomes from messenger RNA at the termination of mitochondrial protein biosynthesis. Not involved in the GTP-dependent ribosomal translocation step during translation elongation. The sequence is that of Ribosome-releasing factor 2, mitochondrial from Drosophila sechellia (Fruit fly).